Consider the following 140-residue polypeptide: Large-conductance mechanosensitive channel 3 (140 aa).

Transmembrane regions (helical) follow at residues 8-28 (FISKGNVMDLAVGVIIGAAFG), 30-50 (IVTSLVDDVIMPIFGAIFGGL), and 81-101 (GSFITAVLNFLILAFIIFLMV).

The protein belongs to the MscL family. As to quaternary structure, homopentamer.

The protein localises to the cell inner membrane. Its function is as follows. Channel that opens in response to stretch forces in the membrane lipid bilayer. May participate in the regulation of osmotic pressure changes within the cell. In Mesorhizobium japonicum (strain LMG 29417 / CECT 9101 / MAFF 303099) (Mesorhizobium loti (strain MAFF 303099)), this protein is Large-conductance mechanosensitive channel 3.